The chain runs to 1324 residues: Myotubularin-related protein DDB_G0290005 (1324 aa).

The tract at residues 140 to 276 (KYHDNTTPNN…TSSTNGNCST (137 aa)) is disordered. Residues 144–180 (NTTPNNNNNNNNNNNNNNNNTNNNNNNNINKSNNSST) are compositionally biased toward low complexity. A compositionally biased stretch (polar residues) spans 181–194 (DQLNSFSLEKQPSQ). Residues 195–222 (NENLNNNNNNNNNNNNGNNNINNNNLMN) are compositionally biased toward low complexity. Over residues 223 to 247 (SLTQPSTSSRSRLLKSNSTPINLNE) the composition is skewed to polar residues. Low complexity predominate over residues 248 to 276 (SSTSTNSPTLSSTTTTTTTTSSTNGNCST). The Myotubularin phosphatase domain occupies 349 to 807 (GWLFYDPIEE…KGVQLWSDYF (459 aa)). Residues 514–515 (NI), 575–581 (CIDGWDR), and R621 contribute to the substrate site. The Phosphocysteine intermediate role is filled by C575. Disordered stretches follow at residues 624–664 (QSIS…TTTS), 841–1043 (QKKK…QQQE), 1066–1110 (EQQE…QQQT), 1144–1213 (RKQE…LTMP), and 1232–1296 (LHPN…DNTS). Composition is skewed to low complexity over residues 625–664 (SISS…TTTS) and 852–864 (GASG…SGSS). Over residues 865–882 (SKHHHHHHHHHHHHHHRK) the composition is skewed to basic residues. Positions 883–894 (STDEKDSKEKSS) are enriched in basic and acidic residues. Composition is skewed to low complexity over residues 899–914 (SRTS…STSS) and 927–973 (TITT…TTTP). Residues 988 to 1002 (DKLKSPSGDDIKQEQ) are compositionally biased toward basic and acidic residues. A compositionally biased stretch (polar residues) spans 1005 to 1024 (MNQFTSQHPNNQMESSSEIN). Residues 1020-1195 (SSEINQQNEQ…LEQQKPKADI (176 aa)) are a coiled coil. Residues 1025–1043 (QQNEQSQLEQQQEQQQQQE) show a composition bias toward low complexity. Polar residues predominate over residues 1079–1090 (PNETITYSMESD). Residues 1091-1109 (SQSSISQNQNQLQQQQQQQ) are compositionally biased toward low complexity. Over residues 1144 to 1193 (RKQEKEKRKLEKEKKQKERAERKLEKEKKRDQKEREQKEKELLEQQKPKA) the composition is skewed to basic and acidic residues. A compositionally biased stretch (polar residues) spans 1234–1243 (PNLSDQNSQT). 2 stretches are compositionally biased toward low complexity: residues 1244 to 1258 (NSSG…NSPN) and 1265 to 1294 (SNLS…NNDN).

Belongs to the protein-tyrosine phosphatase family. Non-receptor class myotubularin subfamily.

Its subcellular location is the cytoplasm. Phosphatase that acts on lipids with a phosphoinositol headgroup. The chain is Myotubularin-related protein DDB_G0290005 from Dictyostelium discoideum (Social amoeba).